The sequence spans 299 residues: Leucine zipper transcription factor-like protein 1 (299 aa).

The stretch at 96 to 299 forms a coiled coil; the sequence is LKLQTDISEL…KRLAKYESED (204 aa). Positions 145-299 are interaction with BSS9; sequence GTTELLNKEI…KRLAKYESED (155 aa).

The protein belongs to the LZTFL1 family. In terms of assembly, self-associates. Interacts with BBS9; the interaction mediates the association of LZTL1 with the BBsome complex and regulates BBSome ciliary trafficking. In terms of tissue distribution, highly expressed in testis. Expressed in brain, cerebellum, eye, heart, kidney, liver, lung and trachea. In small intestine, graded expression along the crypt-villus axis with high levels in the villus apex and lower levels in the crypt stem cells (at protein level). Not expressed in skeletal muscle and white adipose tissue.

It is found in the cytoplasm. Regulates ciliary localization of the BBSome complex. Together with the BBSome complex, controls SMO ciliary trafficking and contributes to the sonic hedgehog (SHH) pathway regulation. May play a role in neurite outgrowth. May have tumor suppressor function. This is Leucine zipper transcription factor-like protein 1 (Lztfl1) from Mus musculus (Mouse).